The chain runs to 528 residues: Glucans biosynthesis protein G 2 (528 aa).

A signal peptide spans 1-44 (MRLHLTFNHSTPATGRKNTKHTLFFGSMLACIISIISLVVPAYG).

This sequence belongs to the OpgD/OpgG family.

It localises to the periplasm. Its pathway is glycan metabolism; osmoregulated periplasmic glucan (OPG) biosynthesis. Functionally, involved in the biosynthesis of osmoregulated periplasmic glucans (OPGs). The polypeptide is Glucans biosynthesis protein G 2 (opgG2) (Shewanella oneidensis (strain ATCC 700550 / JCM 31522 / CIP 106686 / LMG 19005 / NCIMB 14063 / MR-1)).